The chain runs to 133 residues: ATP synthase epsilon chain (133 aa).

Residues 103–133 are disordered; sequence VSQMEGQEPSTEKIKAQQNFNRARARVQATK.

The protein belongs to the ATPase epsilon chain family. F-type ATPases have 2 components, CF(1) - the catalytic core - and CF(0) - the membrane proton channel. CF(1) has five subunits: alpha(3), beta(3), gamma(1), delta(1), epsilon(1). CF(0) has three main subunits: a, b and c.

The protein localises to the cellular thylakoid membrane. Functionally, produces ATP from ADP in the presence of a proton gradient across the membrane. The chain is ATP synthase epsilon chain from Prochlorococcus marinus (strain MIT 9313).